We begin with the raw amino-acid sequence, 198 residues long: Dual specificity protein phosphatase 14 (198 aa).

In terms of domain architecture, Tyrosine-protein phosphatase spans 26–167 (GIAQITSSLF…LIDYERQLFG (142 aa)). Residue C111 is the Phosphocysteine intermediate of the active site.

The protein belongs to the protein-tyrosine phosphatase family. Non-receptor class dual specificity subfamily. In terms of assembly, interacts with CD28.

The catalysed reaction is O-phospho-L-tyrosyl-[protein] + H2O = L-tyrosyl-[protein] + phosphate. It catalyses the reaction O-phospho-L-seryl-[protein] + H2O = L-seryl-[protein] + phosphate. The enzyme catalyses O-phospho-L-threonyl-[protein] + H2O = L-threonyl-[protein] + phosphate. Involved in the inactivation of MAP kinases. Dephosphorylates ERK, JNK and p38 MAP-kinases. Plays a negative role in TCR signaling by dephosphorylating MAP3K7 adapter TAB1 leading to its inactivation. The protein is Dual specificity protein phosphatase 14 (DUSP14) of Homo sapiens (Human).